The chain runs to 314 residues: Short-chain dehydrogenase/reductase drtF (314 aa).

Valine 26, lysine 50, aspartate 73, asparagine 100, tyrosine 185, and lysine 189 together coordinate NADP(+). The Proton acceptor role is filled by tyrosine 185. Residue lysine 189 is the Lowers pKa of active site Tyr of the active site.

The protein belongs to the short-chain dehydrogenases/reductases (SDR) family.

The protein operates within secondary metabolite biosynthesis; terpenoid biosynthesis. In terms of biological role, short-chain dehydrogenase/reductase; part of the gene cluster that mediates the biosynthesis of various drimane-type sesquiterpene esters, compounds that exhibit diverse biological activities and are widely present in eukaryotes. The pathway begins with the synthesis of the backbone drimenol by the terpene cyclase drtB using farnesyl pyrophosphate (FPP) as substrate. The cytochrome P450 monooxygenase drtD is then responsible for the hydroxylations at C-6, C-9 and C-12, as well as the oxidation of hydroxyl groups at C-6 and C-11 to a ketone and an aldehyde, respectively. Then, the biosynthesis can go in two directions, either the hydroxylated drimenol is further hydroxylated at C-2 and C-3 by an enzyme(s) not associated with the drt cluster, or the FAD-binding oxidoreductase drtC further oxidizes C-11 or C-12 to form the butyrolactone ring. DrtB, drtD and drtC are solely responsible for the formation of the different drimane structures observed during drimane sesquiterpenes biosynthesis. The polyketide synthase drtA synthesizes different lengths (C6 and C8) of PKS chains, which are then oxidized to varying degrees by the short-chain dehydrogenase drtF. Finally, these PKS chains are transferred onto drimane sesquiterpenes by the acyltransferase drtE, forming the sesquiterpene esters. In addition to the different fatty acyl-CoA chains produced by drtA, drtE is also able to use cinnamoyl-CoA as a substrate. This Aspergillus calidoustus protein is Short-chain dehydrogenase/reductase drtF.